The sequence spans 180 residues: Large ribosomal subunit protein uL6 (180 aa).

The protein belongs to the universal ribosomal protein uL6 family. In terms of assembly, part of the 50S ribosomal subunit.

Functionally, this protein binds to the 23S rRNA, and is important in its secondary structure. It is located near the subunit interface in the base of the L7/L12 stalk, and near the tRNA binding site of the peptidyltransferase center. This chain is Large ribosomal subunit protein uL6, found in Clostridium botulinum (strain Okra / Type B1).